The primary structure comprises 389 residues: Very-long-chain 3-oxoacyl-CoA reductase (389 aa).

A helical membrane pass occupies residues 34–54 (IAVFLLAIGLFHVALKVVSYV). Valine 80, aspartate 134, asparagine 162, tyrosine 239, lysine 243, valine 272, and serine 274 together coordinate NADP(+). Catalysis depends on tyrosine 239, which acts as the Proton donor. The Lowers pKa of active site Tyr role is filled by lysine 243. The segment at 359–389 (QAAGGVADPKNTTAAREGYATESLKNETLKH) is disordered.

Belongs to the short-chain dehydrogenases/reductases (SDR) family.

It is found in the endoplasmic reticulum membrane. The enzyme catalyses a very-long-chain (3R)-3-hydroxyacyl-CoA + NADP(+) = a very-long-chain 3-oxoacyl-CoA + NADPH + H(+). The protein operates within lipid metabolism; fatty acid biosynthesis. In terms of biological role, component of the microsomal membrane bound fatty acid elongation system, which produces the 26-carbon very long-chain fatty acids (VLCFA) from palmitate. Catalyzes the reduction of the 3-ketoacyl-CoA intermediate that is formed in each cycle of fatty acid elongation. VLCFAs serve as precursors for ceramide and sphingolipids. The chain is Very-long-chain 3-oxoacyl-CoA reductase from Yarrowia lipolytica (strain CLIB 122 / E 150) (Yeast).